The chain runs to 451 residues: Penicillin-binding protein 4* (451 aa).

Residue serine 61 is the Acyl-ester intermediate of the active site.

It belongs to the beta-lactamase family.

Its subcellular location is the forespore outer membrane. It functions in the pathway cell wall biogenesis; peptidoglycan biosynthesis. Probably involved in peptidoglycan modification during cortex synthesis. The chain is Penicillin-binding protein 4* (pbpE) from Bacillus subtilis (strain 168).